Reading from the N-terminus, the 200-residue chain is Large ribosomal subunit protein uL13 (200 aa).

This sequence belongs to the universal ribosomal protein uL13 family. In terms of assembly, component of the large ribosomal subunit. Mature ribosomes consist of a small (40S) and a large (60S) subunit. The 40S subunit contains about 32 different proteins and 1 molecule of RNA (18S). The 60S subunit contains 45 different proteins and 3 molecules of RNA (25S, 5.8S and 5S).

The protein localises to the cytoplasm. Functionally, component of the ribosome, a large ribonucleoprotein complex responsible for the synthesis of proteins in the cell. The small ribosomal subunit (SSU) binds messenger RNAs (mRNAs) and translates the encoded message by selecting cognate aminoacyl-transfer RNA (tRNA) molecules. The large subunit (LSU) contains the ribosomal catalytic site termed the peptidyl transferase center (PTC), which catalyzes the formation of peptide bonds, thereby polymerizing the amino acids delivered by tRNAs into a polypeptide chain. The nascent polypeptides leave the ribosome through a tunnel in the LSU and interact with protein factors that function in enzymatic processing, targeting, and the membrane insertion of nascent chains at the exit of the ribosomal tunnel. The chain is Large ribosomal subunit protein uL13 from Candida albicans (strain SC5314 / ATCC MYA-2876) (Yeast).